The sequence spans 157 residues: Probable intracellular pathogenesis-related protein T1 (157 aa).

Residues Asn79 and Asn117 are each glycosylated (N-linked (GlcNAc...) asparagine).

This sequence belongs to the BetVI family.

The sequence is that of Probable intracellular pathogenesis-related protein T1 (PCKR3) from Catharanthus roseus (Madagascar periwinkle).